Here is a 90-residue protein sequence, read N- to C-terminus: Small ribosomal subunit protein uS15 (90 aa).

The protein belongs to the universal ribosomal protein uS15 family. In terms of assembly, part of the 30S ribosomal subunit. Forms a bridge to the 50S subunit in the 70S ribosome, contacting the 23S rRNA.

One of the primary rRNA binding proteins, it binds directly to 16S rRNA where it helps nucleate assembly of the platform of the 30S subunit by binding and bridging several RNA helices of the 16S rRNA. In terms of biological role, forms an intersubunit bridge (bridge B4) with the 23S rRNA of the 50S subunit in the ribosome. This chain is Small ribosomal subunit protein uS15, found in Paraburkholderia xenovorans (strain LB400).